Consider the following 382-residue polypeptide: Protein delta homolog 2 (382 aa).

The N-terminal stretch at 1 to 26 is a signal peptide; sequence MPSGCRCLNLVCLLCILGATSQPARA. EGF-like domains follow at residues 27–58, 62–89, 91–129, and 131–172; these read DDCS…LHCE, RMPG…KFCD, DEHI…RGCE, and KAGP…AHCE. Over 27–305 the chain is Extracellular; that stretch reads DDCSSHCDLA…RQESGLGESS (279 aa). Cystine bridges form between Cys29–Cys40, Cys33–Cys46, Cys48–Cys57, Cys66–Cys71, Cys79–Cys88, Cys95–Cys107, Cys101–Cys117, Cys119–Cys128, Cys135–Cys148, Cys142–Cys160, Cys162–Cys171, Cys178–Cys189, Cys183–Cys198, Cys200–Cys209, Cys216–Cys227, Cys221–Cys236, and Cys238–Cys247. Asn157 carries N-linked (GlcNAc...) asparagine glycosylation. One can recognise an EGF-like 5; calcium-binding domain in the interval 174-210; that stretch reads NVDDCLMRPCANGATCIDGINRFSCLCPEGFAGRFCT. In terms of domain architecture, EGF-like 6; calcium-binding spans 212–248; it reads NLDDCASRPCQRGARCRDRVHDFDCLCPSGYGGKTCE. A helical membrane pass occupies residues 306–326; sequence LVALVVFGSLTAALVLATVLL. Topologically, residues 327-382 are cytoplasmic; sequence TLRAWRRGICPTGPCCYPAPHYAPARQDQECQVSMLPAGFPLSPDLPPEPGKTTAL.

Detected in a number of tissues including lung, brain, adrenal gland, testis, adult liver, placenta, ovary and thymus. Not detected in fetal liver or in adult spleen, muscle and heart.

Its subcellular location is the membrane. Functionally, regulates adipogenesis. This is Protein delta homolog 2 (Dlk2) from Mus musculus (Mouse).